A 154-amino-acid polypeptide reads, in one-letter code: 17 kDa surface antigen (154 aa).

A signal peptide spans 1 to 19; the sequence is MKLLSKIMIIALAASMLQA. A lipid anchor (N-palmitoyl cysteine) is attached at C20. The S-diacylglycerol cysteine moiety is linked to residue C20.

This sequence belongs to the rickettsiale 17 kDa surface antigen family.

It is found in the cell outer membrane. This chain is 17 kDa surface antigen (omp), found in Rickettsia australis.